Consider the following 768-residue polypeptide: Probable LRR receptor-like serine/threonine-protein kinase At4g37250 (768 aa).

An N-terminal signal peptide occupies residues 1-21 (MRMELISVIFFFFCSVLSSSA). At 22–328 (LNSDGLVLMK…PNPRTGLRPG (307 aa)) the chain is on the extracellular side. N64 is a glycosylation site (N-linked (GlcNAc...) asparagine). LRR repeat units follow at residues 67 to 90 (KVLT…GSLL), 91 to 112 (TLQS…SFFN), 115 to 137 (ELRF…IGDL), 139 to 162 (NLLT…ASLR), 163 to 183 (NLTV…GGWR), 184 to 206 (VVEF…FGGY), 207 to 229 (SLQY…IGVN), and 232 to 254 (RNVT…PVFL). N-linked (GlcNAc...) asparagine glycosylation is present at N99. Residues N144, N163, N196, N212, N233, and N242 are each glycosylated (N-linked (GlcNAc...) asparagine). The segment at 301-324 (PNTIGSNPVTDPNSQQTDPNPRTG) is disordered. The span at 303–320 (TIGSNPVTDPNSQQTDPN) shows a compositional bias: polar residues. The chain crosses the membrane as a helical span at residues 329-349 (VIIGIVVGDIAGIGILAVIFL). At 350–768 (YIYRCKKNKI…IKSSSFHYGH (419 aa)) the chain is on the cytoplasmic side. Positions 361–432 (DNNNNDKQRT…NANQRSGDNK (72 aa)) are disordered. Residues 378-387 (STFSSSSSSP) show a composition bias toward low complexity. The segment covering 407–420 (PSEEEDEDDEDEES) has biased composition (acidic residues). One can recognise a Protein kinase domain in the interval 449-756 (KASAYILGAT…AVLERFHPNS (308 aa)). Residues S451 and S531 each carry the phosphoserine modification. The residue at position 553 (T553) is a Phosphothreonine. S662 is subject to Phosphoserine.

This sequence belongs to the protein kinase superfamily. Ser/Thr protein kinase family.

It is found in the membrane. It catalyses the reaction L-seryl-[protein] + ATP = O-phospho-L-seryl-[protein] + ADP + H(+). The catalysed reaction is L-threonyl-[protein] + ATP = O-phospho-L-threonyl-[protein] + ADP + H(+). The chain is Probable LRR receptor-like serine/threonine-protein kinase At4g37250 from Arabidopsis thaliana (Mouse-ear cress).